Here is a 140-residue protein sequence, read N- to C-terminus: ATP synthase epsilon chain (140 aa).

This sequence belongs to the ATPase epsilon chain family. F-type ATPases have 2 components, CF(1) - the catalytic core - and CF(0) - the membrane proton channel. CF(1) has five subunits: alpha(3), beta(3), gamma(1), delta(1), epsilon(1). CF(0) has three main subunits: a, b and c.

The protein resides in the cell inner membrane. Its function is as follows. Produces ATP from ADP in the presence of a proton gradient across the membrane. The protein is ATP synthase epsilon chain (atpC) of Vibrio alginolyticus.